The primary structure comprises 371 residues: DNA repair and recombination protein rti1 (371 aa).

Residues 346–371 form a disordered region; it reads IDHNRSMPIRRPSLTSNNSANTFSTK. Residues 358 to 371 are compositionally biased toward polar residues; the sequence is SLTSNNSANTFSTK.

The protein belongs to the RAD52 family. Interacts with rph51 and rph54.

In terms of biological role, active in the repair of DNA damage and in mating-type switching. Probably involved in the repair of DNA double-strands breaks. Has a role in promoting S phase completion. The polypeptide is DNA repair and recombination protein rti1 (rti1) (Schizosaccharomyces pombe (strain 972 / ATCC 24843) (Fission yeast)).